A 428-amino-acid polypeptide reads, in one-letter code: GTPase Obg (428 aa).

In terms of domain architecture, Obg spans 1 to 158; the sequence is MFIDTAKIFV…RWVALELKLL (158 aa). The OBG-type G domain occupies 159-331; it reads ADVGLLGFPN…VIKEAARMLK (173 aa). Residues 165 to 172, 190 to 194, 212 to 215, 282 to 285, and 312 to 314 each bind GTP; these read GFPNVGKS, FTTLK, DVPG, NKCD, and SAA. Residues Ser-172 and Thr-192 each contribute to the Mg(2+) site. In terms of domain architecture, OCT spans 345–428; sequence RFIPEDKKFT…LNDFEFEYLL (84 aa).

The protein belongs to the TRAFAC class OBG-HflX-like GTPase superfamily. OBG GTPase family. In terms of assembly, monomer. Mg(2+) serves as cofactor.

The protein resides in the cytoplasm. Its function is as follows. An essential GTPase which binds GTP, GDP and possibly (p)ppGpp with moderate affinity, with high nucleotide exchange rates and a fairly low GTP hydrolysis rate. Plays a role in control of the cell cycle, stress response, ribosome biogenesis and in those bacteria that undergo differentiation, in morphogenesis control. The protein is GTPase Obg of Clostridium perfringens (strain ATCC 13124 / DSM 756 / JCM 1290 / NCIMB 6125 / NCTC 8237 / Type A).